The primary structure comprises 391 residues: Outer membrane protein 41 (391 aa).

Positions 1 to 20 are cleaved as a signal peptide; that stretch reads MKVKYLMLTLVGAIALNASA. Glutamine 21 carries the pyrrolidone carboxylic acid modification. In terms of domain architecture, OmpA-like spans 282-391; it reads TKTENILTEK…WNRVVIVRSK (110 aa).

This sequence belongs to the outer membrane OOP (TC 1.B.6) superfamily. Disulfide-linked heterodimer with Omp40.

It is found in the cell outer membrane. Functionally, may have porin activity and function in peptidoglycan binding. This chain is Outer membrane protein 41, found in Porphyromonas gingivalis (strain ATCC BAA-308 / W83).